Here is a 258-residue protein sequence, read N- to C-terminus: Global transcriptional regulator CodY (258 aa).

The segment at 1–156 is GAF domain; sequence MSSLLSKTRR…SATIVGMEML (156 aa). The segment at residues 204–223 is a DNA-binding region (H-T-H motif); that stretch reads ASKIADKVGITRSVIVNALR.

This sequence belongs to the CodY family.

The protein localises to the cytoplasm. Its function is as follows. DNA-binding global transcriptional regulator which is involved in the adaptive response to starvation and acts by directly or indirectly controlling the expression of numerous genes in response to nutrient availability. During rapid exponential growth, CodY is highly active and represses genes whose products allow adaptation to nutrient depletion. In Clostridium botulinum (strain Eklund 17B / Type B), this protein is Global transcriptional regulator CodY.